The following is a 187-amino-acid chain: Ribosome-recycling factor (187 aa).

Belongs to the RRF family.

It localises to the cytoplasm. Its function is as follows. Responsible for the release of ribosomes from messenger RNA at the termination of protein biosynthesis. May increase the efficiency of translation by recycling ribosomes from one round of translation to another. The polypeptide is Ribosome-recycling factor (Anaeromyxobacter sp. (strain Fw109-5)).